Consider the following 266-residue polypeptide: NADH dehydrogenase [ubiquinone] iron-sulfur protein 3, mitochondrial (266 aa).

Residues 1 to 38 constitute a mitochondrion transit peptide; it reads MAAAVAAAARGCWQRLVGSAAPARVAGRPSVLLLPVRR.

This sequence belongs to the complex I 30 kDa subunit family. Core subunit of respiratory chain NADH dehydrogenase (Complex I) which is composed of 45 different subunits. Interacts with NDUFAF3. Interacts with RAB5IF. Found in subcomplexes containing subunits NDUFS2, MT-ND1 and NDUFA13.

The protein localises to the mitochondrion inner membrane. The enzyme catalyses a ubiquinone + NADH + 5 H(+)(in) = a ubiquinol + NAD(+) + 4 H(+)(out). Its function is as follows. Core subunit of the mitochondrial membrane respiratory chain NADH dehydrogenase (Complex I) which catalyzes electron transfer from NADH through the respiratory chain, using ubiquinone as an electron acceptor. Essential for the catalytic activity and assembly of complex I. In Bos taurus (Bovine), this protein is NADH dehydrogenase [ubiquinone] iron-sulfur protein 3, mitochondrial (NDUFS3).